Reading from the N-terminus, the 156-residue chain is Ribosomal RNA large subunit methyltransferase H (156 aa).

S-adenosyl-L-methionine-binding positions include L73, G104, and L123–L128.

The protein belongs to the RNA methyltransferase RlmH family. Homodimer.

The protein localises to the cytoplasm. It catalyses the reaction pseudouridine(1915) in 23S rRNA + S-adenosyl-L-methionine = N(3)-methylpseudouridine(1915) in 23S rRNA + S-adenosyl-L-homocysteine + H(+). Its function is as follows. Specifically methylates the pseudouridine at position 1915 (m3Psi1915) in 23S rRNA. The sequence is that of Ribosomal RNA large subunit methyltransferase H from Photorhabdus laumondii subsp. laumondii (strain DSM 15139 / CIP 105565 / TT01) (Photorhabdus luminescens subsp. laumondii).